The chain runs to 156 residues: Transcription antitermination protein NusB (156 aa).

This sequence belongs to the NusB family.

Involved in transcription antitermination. Required for transcription of ribosomal RNA (rRNA) genes. Binds specifically to the boxA antiterminator sequence of the ribosomal RNA (rrn) operons. This chain is Transcription antitermination protein NusB, found in Rickettsia massiliae (strain Mtu5).